We begin with the raw amino-acid sequence, 290 residues long: 33 kDa chaperonin (290 aa).

2 disulfide bridges follow: cysteine 235-cysteine 237 and cysteine 268-cysteine 271.

It belongs to the HSP33 family. Post-translationally, under oxidizing conditions two disulfide bonds are formed involving the reactive cysteines. Under reducing conditions zinc is bound to the reactive cysteines and the protein is inactive.

The protein resides in the cytoplasm. In terms of biological role, redox regulated molecular chaperone. Protects both thermally unfolding and oxidatively damaged proteins from irreversible aggregation. Plays an important role in the bacterial defense system toward oxidative stress. This is 33 kDa chaperonin from Streptococcus gordonii (strain Challis / ATCC 35105 / BCRC 15272 / CH1 / DL1 / V288).